Here is a 496-residue protein sequence, read N- to C-terminus: Glutamyl-tRNA(Gln) amidotransferase subunit A, mitochondrial (496 aa).

Active-site charge relay system residues include Lys75 and Ser162. The active-site Acyl-ester intermediate is Ser186.

This sequence belongs to the amidase family. GatA subfamily. In terms of assembly, subunit of the heterotrimeric GatCAB amidotransferase (AdT) complex, composed of A, B and C subunits.

The protein resides in the mitochondrion. The enzyme catalyses L-glutamyl-tRNA(Gln) + L-glutamine + ATP + H2O = L-glutaminyl-tRNA(Gln) + L-glutamate + ADP + phosphate + H(+). Functionally, allows the formation of correctly charged Gln-tRNA(Gln) through the transamidation of misacylated Glu-tRNA(Gln) in the mitochondria. The reaction takes place in the presence of glutamine and ATP through an activated gamma-phospho-Glu-tRNA(Gln). The sequence is that of Glutamyl-tRNA(Gln) amidotransferase subunit A, mitochondrial from Pediculus humanus subsp. corporis (Body louse).